The following is a 166-amino-acid chain: Sec-independent protein translocase protein TatB (166 aa).

Residues 2–22 traverse the membrane as a helical segment; the sequence is FDGIGFMELLLIGVLGLVVLG. Residues 69–166 form a disordered region; sequence SKGLSNLSPE…DTRSNPKANG (98 aa). 2 stretches are compositionally biased toward polar residues: residues 88–97 and 112–132; these read QAAQSVNRPY and QIYSPVASTVQTSPAQASQAN. The segment covering 133-153 has biased composition (low complexity); the sequence is PTATVEASPAPASPATPSEPS. The segment covering 155-166 has biased composition (polar residues); sequence GADTRSNPKANG.

It belongs to the TatB family. As to quaternary structure, the Tat system comprises two distinct complexes: a TatABC complex, containing multiple copies of TatA, TatB and TatC subunits, and a separate TatA complex, containing only TatA subunits. Substrates initially bind to the TatABC complex, which probably triggers association of the separate TatA complex to form the active translocon.

Its subcellular location is the cell inner membrane. Part of the twin-arginine translocation (Tat) system that transports large folded proteins containing a characteristic twin-arginine motif in their signal peptide across membranes. Together with TatC, TatB is part of a receptor directly interacting with Tat signal peptides. TatB may form an oligomeric binding site that transiently accommodates folded Tat precursor proteins before their translocation. The chain is Sec-independent protein translocase protein TatB from Shewanella baltica (strain OS155 / ATCC BAA-1091).